Consider the following 100-residue polypeptide: Flagellar transcriptional regulator FlhD (100 aa).

It belongs to the FlhD family. As to quaternary structure, homodimer; disulfide-linked. Forms a heterohexamer composed of two FlhC and four FlhD subunits. Each FlhC binds a FlhD dimer, forming a heterotrimer, and a hexamer assembles by dimerization of two heterotrimers.

It is found in the cytoplasm. In terms of biological role, functions in complex with FlhC as a master transcriptional regulator that regulates transcription of several flagellar and non-flagellar operons by binding to their promoter region. Activates expression of class 2 flagellar genes, including fliA, which is a flagellum-specific sigma factor that turns on the class 3 genes. Also regulates genes whose products function in a variety of physiological pathways. The protein is Flagellar transcriptional regulator FlhD of Ralstonia pickettii (strain 12D).